Here is a 377-residue protein sequence, read N- to C-terminus: Alanine racemase (377 aa).

The Proton acceptor; specific for D-alanine role is filled by Lys-37. The residue at position 37 (Lys-37) is an N6-(pyridoxal phosphate)lysine. A substrate-binding site is contributed by Arg-135. Tyr-271 (proton acceptor; specific for L-alanine) is an active-site residue. Residue Met-319 coordinates substrate.

It belongs to the alanine racemase family. Pyridoxal 5'-phosphate serves as cofactor.

The catalysed reaction is L-alanine = D-alanine. Its pathway is amino-acid biosynthesis; D-alanine biosynthesis; D-alanine from L-alanine: step 1/1. Its function is as follows. Catalyzes the interconversion of L-alanine and D-alanine. May also act on other amino acids. The protein is Alanine racemase (alr) of Helicobacter pylori (strain Shi470).